The sequence spans 241 residues: Deoxynucleotide monophosphate kinase (241 aa).

Residue K10 participates in dGMP binding. Positions 11, 13, 15, and 16 each coordinate ATP. Residues I36 and K37 each contribute to the dGMP site. Y42 serves as a coordination point for Mg(2+). R68 is a dGMP binding site. Q85 and E108 together coordinate Mg(2+). DGMP contacts are provided by R132, G139, T140, V144, W152, D175, R177, Q178, E181, and T208.

The protein belongs to the dNMP kinase family. As to quaternary structure, homodimer. Mg(2+) is required as a cofactor.

The catalysed reaction is dTMP + ATP = dTDP + ADP. The enzyme catalyses dGMP + ATP = dGDP + ADP. It carries out the reaction 5-hydroxymethyl-dCMP + ATP = 5-hydroxymethyl-dCDP + ADP. Its activity is regulated as follows. Inhibited by pyridoxal 5'-phosphate and diethylpyrocarbonate. Allows the synthesis of deoxyribonucleoside triphosphates necessary for the rapid viral DNA replication. Phosphorylates dGMP, dTMP and 5-hydroxymethyl-dCMP (hmdCMP) while excluding dCMP and dAMP. The phosphorylation of 5-hydroxymethyl-dCMP represents the first step in the replacement of cytosine by hydroxymethylcytosine in new viral DNA genomes. The polypeptide is Deoxynucleotide monophosphate kinase (1) (Enterobacteria phage T4 (Bacteriophage T4)).